We begin with the raw amino-acid sequence, 363 residues long: Caffeic acid 3-O-methyltransferase (363 aa).

130–136 (MNQDKVL) lines the substrate pocket. Residues 162–180 (AFEYHGKDPRFNKVFNQGM) form a substrate binding region. The S-adenosyl-L-methionine site is built by G208, D231, D251, M252, and K265. H269 (proton acceptor) is an active-site residue.

This sequence belongs to the class I-like SAM-binding methyltransferase superfamily. Cation-independent O-methyltransferase family. COMT subfamily. Homodimer.

The enzyme catalyses (E)-caffeate + S-adenosyl-L-methionine = (E)-ferulate + S-adenosyl-L-homocysteine + H(+). It functions in the pathway aromatic compound metabolism; phenylpropanoid biosynthesis. In terms of biological role, catalyzes the conversion of caffeic acid to ferulic acid and of 5-hydroxyferulic acid to sinapic acid. The resulting products may subsequently be converted to the corresponding alcohols that are incorporated into lignins. In Catharanthus roseus (Madagascar periwinkle), this protein is Caffeic acid 3-O-methyltransferase (COMT1).